A 216-amino-acid polypeptide reads, in one-letter code: Trypsin inhibitor A (216 aa).

Positions 1–24 are cleaved as a signal peptide; it reads MKSTIFFLFLFCAFTTSYLPSAIA. 2 cysteine pairs are disulfide-bonded: Cys-63–Cys-110 and Cys-160–Cys-169. The propeptide occupies 206–216; that stretch reads AKKNHGLSRSE.

This sequence belongs to the protease inhibitor I3 (leguminous Kunitz-type inhibitor) family.

Its function is as follows. Inhibition of trypsin. The chain is Trypsin inhibitor A (KTI3) from Glycine max (Soybean).